The chain runs to 1128 residues: Major DNA-binding protein (1128 aa).

The required for nuclear localization stretch occupies residues 1104-1128 (LGGGGQGSGGRRKRRLATVLPGLEV).

Belongs to the herpesviridae major DNA-binding protein family. In terms of assembly, homooligomers. Forms double-helical filaments necessary for the formation of replication compartments within the host nucleus. Interacts with the origin-binding protein. Interacts with the helicase primase complex; this interaction stimulates primer synthesis activity of the helicase-primase complex. Interacts with the DNA polymerase. Interacts with the alkaline exonuclease; this interaction increases its nuclease processivity.

The protein localises to the virion tegument. Its subcellular location is the host nucleus. Its function is as follows. Plays several crucial roles in viral infection. Participates in the opening of the viral DNA origin to initiate replication by interacting with the origin-binding protein. May disrupt loops, hairpins and other secondary structures present on ssDNA to reduce and eliminate pausing of viral DNA polymerase at specific sites during elongation. Promotes viral DNA recombination by performing strand-transfer, characterized by the ability to transfer a DNA strand from a linear duplex to a complementary single-stranded DNA circle. Can also catalyze the renaturation of complementary single strands. Additionally, reorganizes the host cell nucleus, leading to the formation of prereplicative sites and replication compartments. This process is driven by the protein which can form double-helical filaments in the absence of DNA. The chain is Major DNA-binding protein from Epstein-Barr virus (strain GD1) (HHV-4).